The following is a 697-amino-acid chain: SPX domain-containing membrane protein At1g63010 (697 aa).

Residues 2–145 (VAFGKYLQRK…GYRFADYYVK (144 aa)) enclose the SPX domain. The next 6 membrane-spanning stretches (helical) occupy residues 247–267 (FNSL…TYII), 278–298 (LGAA…AQVF), 315–335 (LVFS…AYDA), 337–356 (SIAL…ARAV), 375–395 (AGFV…AGLL), and 411–431 (LPGW…CISF). The disordered stretch occupies residues 439–459 (EDGEKNNRNETTSDRVESSRV). 5 helical membrane passes run 513–533 (LLIY…SSVI), 544–564 (SVAI…ILVG), 576–596 (ILLT…NLFV), 604–624 (VISG…NLSL), and 670–690 (LLNA…VATC).

The protein belongs to the major facilitator superfamily.

It is found in the membrane. The chain is SPX domain-containing membrane protein At1g63010 from Arabidopsis thaliana (Mouse-ear cress).